Consider the following 334-residue polypeptide: 6-phosphogluconolactonase (334 aa).

Belongs to the cycloisomerase 2 family.

It catalyses the reaction 6-phospho-D-glucono-1,5-lactone + H2O = 6-phospho-D-gluconate + H(+). It functions in the pathway carbohydrate degradation; pentose phosphate pathway; D-ribulose 5-phosphate from D-glucose 6-phosphate (oxidative stage): step 2/3. Its function is as follows. Catalyzes the hydrolysis of 6-phosphogluconolactone to 6-phosphogluconate. The polypeptide is 6-phosphogluconolactonase (Buchnera aphidicola subsp. Acyrthosiphon pisum (strain 5A)).